We begin with the raw amino-acid sequence, 388 residues long: Alanine racemase (388 aa).

Lys39 functions as the Proton acceptor; specific for D-alanine in the catalytic mechanism. Lys39 bears the N6-(pyridoxal phosphate)lysine mark. Lys129 bears the N6-carboxylysine mark. Position 136 (Arg136) interacts with substrate. The active-site Proton acceptor; specific for L-alanine is Tyr265. A substrate-binding site is contributed by Met312.

It belongs to the alanine racemase family. In terms of assembly, homodimer. Requires pyridoxal 5'-phosphate as cofactor.

The enzyme catalyses L-alanine = D-alanine. It participates in amino-acid biosynthesis; D-alanine biosynthesis; D-alanine from L-alanine: step 1/1. With respect to regulation, inhibited by acetate and propionate. Irreversibly inhibited by cycloserine. Catalyzes the interconversion of L-alanine and D-alanine. Also weakly active on serine. The sequence is that of Alanine racemase (alr) from Geobacillus stearothermophilus (Bacillus stearothermophilus).